A 1040-amino-acid polypeptide reads, in one-letter code: DNA cross-link repair 1A protein (1040 aa).

The segment at 1–190 (MLEDISEEDI…RAGDHPFSSP (190 aa)) is nuclear localization region. Residues 15–76 (SKRKPKRVDP…LGNAGCQTSV (62 aa)) are disordered. Positions 53 to 65 (RAAEAKEVKDHEV) are enriched in basic and acidic residues. Residues 119–149 (DGYCPNCQMPFSSLIGQTPRWHVFECLDSPP) form a UBZ4-type zinc finger. Residues C122, C125, H140, and C144 each contribute to the Zn(2+) site. Residues K202, K236, K269, K353, K361, K429, K488, K508, K517, K533, and K536 each participate in a glycyl lysine isopeptide (Lys-Gly) (interchain with G-Cter in SUMO2) cross-link. The segment at 396 to 614 (LPYDLACTGG…KSLSDLEFDA (219 aa)) is nuclear focus formation. Disordered regions lie at residues 582-602 (GINLNPVPSPNQKRSSQCKRK) and 623-651 (SVELSSERSQRQKKRCRKSNSLQEGACQK). A Phosphoserine modification is found at S590. Residues K668, K670, and K674 each participate in a glycyl lysine isopeptide (Lys-Gly) (interchain with G-Cter in SUMO2) cross-link.

It belongs to the DNA repair metallo-beta-lactamase (DRMBL) family. Binds constitutively to TP53BP1. Binds CDC27, which is itself a component of the anaphase promoting complex (APC). Binds PIAS1. In terms of tissue distribution, expressed in brain, heart, kidney, liver, pancreas, placenta and skeletal muscle.

The protein localises to the nucleus. It catalyses the reaction a beta-lactam + H2O = a substituted beta-amino acid. Its activity is regulated as follows. Beta-lactamase activity is inhibited by sulbactam. In terms of biological role, may be required for DNA interstrand cross-link repair. Also required for checkpoint mediated cell cycle arrest in early prophase in response to mitotic spindle poisons. Possesses beta-lactamase activity, catalyzing the hydrolysis of penicillin G and nitrocefin. Exhibits no activity towards other beta-lactam antibiotic classes including cephalosporins (cefotaxime) and carbapenems (imipenem). The chain is DNA cross-link repair 1A protein (DCLRE1A) from Homo sapiens (Human).